The following is a 301-amino-acid chain: Protein translocase subunit SecF (301 aa).

6 helical membrane-spanning segments follow: residues 17–37 (YIAL…IFQI), 137–157 (DALF…AIRF), 163–183 (IGAT…FYIL), 190–210 (IFIS…VVVF), 239–261 (LSRT…FFGG), and 272–292 (ILGI…VVLL).

The protein belongs to the SecD/SecF family. SecF subfamily. As to quaternary structure, forms a complex with SecD. Part of the essential Sec protein translocation apparatus which comprises SecA, SecYEG and auxiliary proteins SecDF. Other proteins may also be involved.

It localises to the cell inner membrane. Functionally, part of the Sec protein translocase complex. Interacts with the SecYEG preprotein conducting channel. SecDF uses the proton motive force (PMF) to complete protein translocation after the ATP-dependent function of SecA. The chain is Protein translocase subunit SecF from Thermodesulfovibrio yellowstonii (strain ATCC 51303 / DSM 11347 / YP87).